Reading from the N-terminus, the 425-residue chain is Actin-related protein 3 (425 aa).

It belongs to the actin family. ARP3 subfamily. In terms of assembly, component of the Arp2/3 complex, at least composed of arx-1, arx-2, arx-4 and arx-6.

The protein resides in the cytoplasm. It localises to the cytoskeleton. Functions as ATP-binding component of the Arp2/3 complex which is involved in regulation of actin polymerization and together with an activating nucleation-promoting factor (NPF) mediates the formation of branched actin networks. Seems to contact the pointed end of the daughter actin filament. Plays a role in time-dependent memory loss and the retention of conditioned behavior over time. The chain is Actin-related protein 3 from Caenorhabditis elegans.